Reading from the N-terminus, the 487-residue chain is Glutamyl-tRNA(Gln) amidotransferase subunit A (487 aa).

Active-site charge relay system residues include lysine 82 and serine 157. The Acyl-ester intermediate role is filled by serine 181.

The protein belongs to the amidase family. GatA subfamily. In terms of assembly, heterotrimer of A, B and C subunits.

The catalysed reaction is L-glutamyl-tRNA(Gln) + L-glutamine + ATP + H2O = L-glutaminyl-tRNA(Gln) + L-glutamate + ADP + phosphate + H(+). Functionally, allows the formation of correctly charged Gln-tRNA(Gln) through the transamidation of misacylated Glu-tRNA(Gln) in organisms which lack glutaminyl-tRNA synthetase. The reaction takes place in the presence of glutamine and ATP through an activated gamma-phospho-Glu-tRNA(Gln). The sequence is that of Glutamyl-tRNA(Gln) amidotransferase subunit A from Fusobacterium nucleatum subsp. nucleatum (strain ATCC 25586 / DSM 15643 / BCRC 10681 / CIP 101130 / JCM 8532 / KCTC 2640 / LMG 13131 / VPI 4355).